The following is a 430-amino-acid chain: Synaptotagmin-11 (430 aa).

The Vesicular portion of the chain corresponds to 1–15 (MAEITNIRPSFDVSP). Residues 16–36 (VAAGLIGASVLVVCVSVTVFV) form a helical membrane-spanning segment. Over 37-430 (WTCCHQQAEK…IAKWHSLSEY (394 aa)) the chain is Cytoplasmic. The segment covering 79 to 90 (RRDKDGPRRESG) has biased composition (basic and acidic residues). Disordered regions lie at residues 79 to 120 (RRDK…CMDQ) and 132 to 152 (RSPMTSLTPGESKATSPSSPE). At serine 133 the chain carries Phosphoserine. The segment covering 134–150 (PMTSLTPGESKATSPSS) has biased composition (polar residues). C2 domains follow at residues 156-278 (MLGS…QLTR) and 290-425 (SRGE…AKWH). The Ca(2+) site is built by aspartate 249, serine 252, and aspartate 255.

This sequence belongs to the synaptotagmin family. As to quaternary structure, homodimer. Can also form heterodimers. Interacts with PRKN. Interacts (via C2 2 domain) with AGO2 and SND1; the interaction with SND1 is direct. Interacts with KIF1A; the interaction increases in presence of calcium. The cofactor is Ca(2+). Ubiquitinated, at least by PRKN, and targeted to the proteasome complex for degradation. Ubiquitination is inhibited by ATP13A2. Expressed in cerebellun, cerebellar cortex, hippocampus, olfactory bulb and spinal cord (at protein level). Expressed by neurons, astrocytes and microglia (at protein level). Expressed in macrophages (at protein level).

The protein localises to the cytoplasmic vesicle membrane. The protein resides in the perikaryon. It is found in the golgi apparatus. It localises to the trans-Golgi network membrane. Its subcellular location is the recycling endosome membrane. The protein localises to the lysosome membrane. The protein resides in the cytoplasmic vesicle. It is found in the phagosome. It localises to the cell projection. Its subcellular location is the axon. The protein localises to the dendrite. The protein resides in the postsynaptic density. It is found in the clathrin-coated vesicle membrane. Synaptotagmin family member involved in vesicular and membrane trafficking which does not bind Ca(2+). Inhibits clathrin-mediated and bulk endocytosis, functions to ensure precision in vesicle retrieval. Plays an important role in dopamine transmission by regulating endocytosis and the vesicle-recycling process. Essential component of a neuronal vesicular trafficking pathway that differs from the synaptic vesicle trafficking pathway but is crucial for development and synaptic plasticity. In macrophages and microglia, inhibits the conventional cytokine secretion, of at least IL6 and TNF, and phagocytosis. In astrocytes, regulates lysosome exocytosis, mechanism required for the repair of injured astrocyte cell membrane. Required for the ATP13A2-mediated regulation of the autophagy-lysosome pathway. This Mus musculus (Mouse) protein is Synaptotagmin-11.